The following is a 539-amino-acid chain: MSCPASPSAAVVSAGALCLCVATVLLATGSNPTALSTASTRSPTSLVRGVDRGLMRPTTAAALTTMREVPQMAEGFSGEATSAWAAAGPQWAAPLVAAASSALALWWWAARRSVRRPLAALAELPTAVTHLAPPMAMFTTTAKVIQPKIRGFICTTTHPIGCEKRVQEEIAYARAHPPTSPGPKRVLVIGCSTGYGLSTRITAAFGYQAATLGVFLAGPPTKGRPAAAGWYNTVAFEKAALEAGLYARSLNGDAFDSTTKARTVEAIKRDLGTVDLVVYSIAAPKRTDPATGVLHKACLKPIGATYTNRTVNTDKAEVTDVSIEPASPEEIADTVKVMGGEDWELWIQALSEAGVLAEGAKTVAYSYIGPEMTWPVYWSGTIGEAKKDVEKAAKRITQQYGCPAYPVVAKALVTQASSAIPVVPLYICLLYRVMKEKGTHEGCIEQMVRLLTTKLYPENGAPIVDEAGRVRVDDWEMAEDVQQAVKDLWSQVSTANLKDISDFAGYQTEFLRLFGFGIDGVDYDQPVDVEADLPSAAQQ.

A mitochondrion-targeting transit peptide spans 1–68 (MSCPASPSAA…TAAALTTMRE (68 aa)). NAD(+)-binding positions include 190-195 (GCSTGY), 216-217 (LA), 253-254 (DA), and 281-282 (IA). Y367 is a binding site for substrate. The active-site Proton donor is Y377. NAD(+) contacts are provided by residues K386 and 412 to 414 (LVT).

This sequence belongs to the TER reductase family. As to quaternary structure, monomer. The N-terminus is blocked.

Its subcellular location is the mitochondrion. It carries out the reaction a 2,3-saturated acyl-CoA + NAD(+) = a (2E)-enoyl-CoA + NADH + H(+). The catalysed reaction is butanoyl-CoA + NAD(+) = (2E)-butenoyl-CoA + NADH + H(+). The enzyme catalyses hexanoyl-CoA + NAD(+) = (2E)-hexenoyl-CoA + NADH + H(+). It catalyses the reaction a (2E)-enoyl-CoA + NADPH + H(+) = a 2,3-saturated acyl-CoA + NADP(+). It carries out the reaction butanoyl-CoA + NADP(+) = (2E)-butenoyl-CoA + NADPH + H(+). The catalysed reaction is (2E)-hexenoyl-CoA + NADPH + H(+) = hexanoyl-CoA + NADP(+). It participates in lipid metabolism; fatty acid metabolism. Functionally, catalyzes reduction of trans-2-enoyl-CoA to acyl-CoA, an important step in the fatty acid biosynthesis pathway, which is performed in mitochondria under anaerobiosis. Preferably catalyzes the reduction of short chain length substrates such as crotonyl-CoA ((2E)-butenoyl-CoA) and (2E)-hexenoyl-CoA. Can use both NADH and NADPH as electron donor, with 2-3-fold higher specific activities for NADH relative to NADPH. Originally thought to contribute to wax ester production under anaerobic conditions. Later shown to be dispensable for wax ester production under anaerobic conditions, but involved in the greening process (chlorophyll synthesis and/or chloroplast development). In Euglena gracilis, this protein is Trans-2-enoyl-CoA reductase (TER).